The sequence spans 508 residues: 2,3-bisphosphoglycerate-independent phosphoglycerate mutase (508 aa).

Positions 11 and 61 each coordinate Mn(2+). The Phosphoserine intermediate role is filled by Ser61. Substrate-binding positions include His122, 150–151 (RD), Arg182, Arg188, 257–260 (RPDR), and Lys332. 5 residues coordinate Mn(2+): Asp397, His401, Asp438, His439, and His456.

Belongs to the BPG-independent phosphoglycerate mutase family. In terms of assembly, monomer. It depends on Mn(2+) as a cofactor.

It carries out the reaction (2R)-2-phosphoglycerate = (2R)-3-phosphoglycerate. It participates in carbohydrate degradation; glycolysis; pyruvate from D-glyceraldehyde 3-phosphate: step 3/5. Its function is as follows. Catalyzes the interconversion of 2-phosphoglycerate and 3-phosphoglycerate. This chain is 2,3-bisphosphoglycerate-independent phosphoglycerate mutase, found in Mycoplasma pneumoniae (strain ATCC 29342 / M129 / Subtype 1) (Mycoplasmoides pneumoniae).